The primary structure comprises 114 residues: UPF0145 protein STK_10800 (114 aa).

It belongs to the UPF0145 family.

The protein is UPF0145 protein STK_10800 of Sulfurisphaera tokodaii (strain DSM 16993 / JCM 10545 / NBRC 100140 / 7) (Sulfolobus tokodaii).